A 257-amino-acid chain; its full sequence is GTP cyclohydrolase FolE2 (257 aa).

The protein belongs to the GTP cyclohydrolase IV family.

The catalysed reaction is GTP + H2O = 7,8-dihydroneopterin 3'-triphosphate + formate + H(+). Its pathway is cofactor biosynthesis; 7,8-dihydroneopterin triphosphate biosynthesis; 7,8-dihydroneopterin triphosphate from GTP: step 1/1. Converts GTP to 7,8-dihydroneopterin triphosphate. This is GTP cyclohydrolase FolE2 from Pelobacter propionicus (strain DSM 2379 / NBRC 103807 / OttBd1).